Here is a 482-residue protein sequence, read N- to C-terminus: Tektin (482 aa).

Coiled coils occupy residues 100-129 (CLAE…QAKI), 171-204 (ARAV…ALRV), 282-324 (RLNE…ALTS), 376-407 (VKVA…DALR), and 441-478 (RTQT…TMGG). The disordered stretch occupies residues 311-330 (EQARAKGQRSALTSALDDKR). At Arg462 the chain carries Asymmetric dimethylarginine.

This sequence belongs to the tektin family. In terms of processing, asymmetrically dimethylated at Arg-462 during flagellum resorption. Probably methylated by PRMT1.

It is found in the cytoplasm. Its subcellular location is the cytoskeleton. The protein localises to the flagellum axoneme. It localises to the flagellum basal body. Structural component of ciliary and flagellar microtubules. Plays a key role in the assembly or attachment of the inner dynein arm to microtubules in flagella and cilia. Forms filamentous polymers in the walls of ciliary and flagellar microtubules. The polypeptide is Tektin (Chlamydomonas reinhardtii (Chlamydomonas smithii)).